A 165-amino-acid polypeptide reads, in one-letter code: Putative pre-16S rRNA nuclease (165 aa).

It belongs to the YqgF nuclease family.

The protein localises to the cytoplasm. Its function is as follows. Could be a nuclease involved in processing of the 5'-end of pre-16S rRNA. This Beijerinckia indica subsp. indica (strain ATCC 9039 / DSM 1715 / NCIMB 8712) protein is Putative pre-16S rRNA nuclease.